The following is a 326-amino-acid chain: Vitamin B12 import system permease protein BtuC (326 aa).

The Cytoplasmic portion of the chain corresponds to 1 to 10 (MLTLARQQQR). The chain crosses the membrane as a helical span at residues 11-35 (QNIRWLLCLSVLMLLALLLSLCAGE). The Periplasmic segment spans residues 36-56 (QWISPGDWFSPRGELFVWQIR). The chain crosses the membrane as a helical span at residues 57 to 81 (LPRTLAVLLVGAALAISGAVMQALF). Residues 82-92 (ENPLAEPGLLG) lie on the Cytoplasmic side of the membrane. The chain crosses the membrane as a helical span at residues 93 to 107 (VSNGAGVGLIAAVLL). At 108–113 (GQGQLP) the chain is on the periplasmic side. Residues 114–138 (NWALGLCAIAGALIITLILLRFARR) form a helical membrane-spanning segment. Residues 139 to 141 (HLS) lie on the Cytoplasmic side of the membrane. Residues 142 to 166 (TSRLLLAGVALGIICSALMTWAIYF) traverse the membrane as a helical segment. Residues 167 to 190 (STSVDLRQLMYWMMGGFGGVDWRQ) are Periplasmic-facing. The chain crosses the membrane as a helical span at residues 191-206 (SWLMLALIPMLLWICC). The Cytoplasmic segment spans residues 207–228 (QSRPMNMLALGEISARQLGLPL). A helical membrane pass occupies residues 229–249 (WFWRNVLVAATGWMVGVSVAL). Residues 250–257 (AGAIGFIG) are Periplasmic-facing. Residues 258 to 267 (LVIPHILRLC) form a helical membrane-spanning segment. The Cytoplasmic segment spans residues 268–274 (GLTDHRA). The helical transmembrane segment at 275–296 (LLPGCALAGASALLLADIVARL) threads the bilayer. Residues 297 to 304 (ALAAAELP) lie on the Periplasmic side of the membrane. The helical transmembrane segment at 305–324 (IGVVTATLGAPVFIWLLLKA) threads the bilayer. Residues 325 to 326 (GR) are Cytoplasmic-facing.

This sequence belongs to the binding-protein-dependent transport system permease family. FecCD subfamily. The complex is composed of two ATP-binding proteins (BtuD), two transmembrane proteins (BtuC) and a solute-binding protein (BtuF).

The protein localises to the cell inner membrane. In terms of biological role, part of the ABC transporter complex BtuCDF involved in vitamin B12 import. Involved in the translocation of the substrate across the membrane. This chain is Vitamin B12 import system permease protein BtuC (btuC), found in Escherichia coli O157:H7.